A 141-amino-acid chain; its full sequence is Large ribosomal subunit protein uL16 (141 aa).

It belongs to the universal ribosomal protein uL16 family. In terms of assembly, part of the 50S ribosomal subunit.

Functionally, binds 23S rRNA and is also seen to make contacts with the A and possibly P site tRNAs. The polypeptide is Large ribosomal subunit protein uL16 (Petrotoga mobilis (strain DSM 10674 / SJ95)).